A 458-amino-acid polypeptide reads, in one-letter code: Cysteine protease ATG4C (458 aa).

At M1 the chain carries N-acetylmethionine. C111 functions as the Nucleophile in the catalytic mechanism. Residues D345 and H347 contribute to the active site. S451 carries the phosphoserine modification. Residue T452 is modified to Phosphothreonine.

Belongs to the peptidase C54 family.

The protein resides in the cytoplasm. The enzyme catalyses [protein]-C-terminal L-amino acid-glycyl-phosphatidylethanolamide + H2O = [protein]-C-terminal L-amino acid-glycine + a 1,2-diacyl-sn-glycero-3-phosphoethanolamine. Its activity is regulated as follows. Inhibited by N-ethylmaleimide. Cysteine protease that plays a key role in autophagy by mediating both proteolytic activation and delipidation of ATG8 family proteins. The protease activity is required for proteolytic activation of ATG8 family proteins: cleaves the C-terminal amino acid of ATG8 proteins MAP1LC3 and GABARAPL2, to reveal a C-terminal glycine. Exposure of the glycine at the C-terminus is essential for ATG8 proteins conjugation to phosphatidylethanolamine (PE) and insertion to membranes, which is necessary for autophagy. In addition to the protease activity, also mediates delipidation of ATG8 family proteins. Catalyzes delipidation of PE-conjugated forms of ATG8 proteins during macroautophagy. Compared to ATG4B, the major protein for proteolytic activation of ATG8 proteins, shows weaker ability to cleave the C-terminal amino acid of ATG8 proteins, while it displays stronger delipidation activity. In contrast to other members of the family, weakly or not involved in phagophore growth during mitophagy. This Homo sapiens (Human) protein is Cysteine protease ATG4C.